The following is a 167-amino-acid chain: Sporulation membrane protein YtrI (167 aa).

A helical membrane pass occupies residues 15 to 35 (FFAGMMCGAVISWFFFLFTYG).

It localises to the cell membrane. Functionally, involved in sporulation. The chain is Sporulation membrane protein YtrI (ytrI) from Bacillus subtilis (strain 168).